The following is a 431-amino-acid chain: Adenylosuccinate synthetase (431 aa).

GTP-binding positions include 12–18 and 40–42; these read GDEGKGK and GHT. Asp13 functions as the Proton acceptor in the catalytic mechanism. Residues Asp13 and Gly40 each contribute to the Mg(2+) site. Residues 13-16, 38-41, Thr128, Arg142, Gln225, Thr240, and Arg304 contribute to the IMP site; these read DEGK and NAGH. The active-site Proton donor is the His41. 300-306 is a substrate binding site; the sequence is TTTGRPR. Residues Arg306, 332 to 334, and 414 to 416 each bind GTP; these read KLD and GVG.

It belongs to the adenylosuccinate synthetase family. Homodimer. Mg(2+) serves as cofactor.

Its subcellular location is the cytoplasm. It carries out the reaction IMP + L-aspartate + GTP = N(6)-(1,2-dicarboxyethyl)-AMP + GDP + phosphate + 2 H(+). The protein operates within purine metabolism; AMP biosynthesis via de novo pathway; AMP from IMP: step 1/2. Plays an important role in the de novo pathway of purine nucleotide biosynthesis. Catalyzes the first committed step in the biosynthesis of AMP from IMP. The chain is Adenylosuccinate synthetase from Thermomicrobium roseum (strain ATCC 27502 / DSM 5159 / P-2).